The sequence spans 137 residues: Fibroblast growth factor 2 (137 aa).

Heparin is bound at residue asparagine 27. Phosphotyrosine; by TEC is present on tyrosine 73. A Glycyl lysine isopeptide (Lys-Gly) (interchain with G-Cter in SUMO1) cross-link involves residue lysine 86. The interval 119-135 is heparin-binding; that stretch reads KRTGQYKLGSKTGPGQK.

Belongs to the heparin-binding growth factors family. As to quaternary structure, monomer. Homodimer. Interacts with FGFR1, FGFR2, FGFR3 and FGFR4. Affinity between fibroblast growth factors (FGFs) and their receptors is increased by heparan sulfate glycosaminoglycans that function as coreceptors. Interacts with CSPG4, FGFBP1 and TEC. Found in a complex with FGFBP1, FGF1 and FGF2. Interacts with FGFBP3. Interacts with integrin ITGAV:ITGB3; the interaction is required for FGF2 signaling. Interacts with SNORC (via the extracellular domain). Interacts with glypican GPC3. In terms of processing, phosphorylation at Tyr-73 regulates FGF2 unconventional secretion.

The protein localises to the secreted. It is found in the nucleus. Acts as a ligand for FGFR1, FGFR2, FGFR3 and FGFR4. Also acts as an integrin ligand which is required for FGF2 signaling. Binds to integrin ITGAV:ITGB3. Plays an important role in the regulation of cell survival, cell division, cell differentiation and cell migration. Functions as a potent mitogen in vitro. Can induce angiogenesis. Mediates phosphorylation of ERK1/2 and thereby promotes retinal lens fiber differentiation. The sequence is that of Fibroblast growth factor 2 (FGF2) from Oryctolagus cuniculus (Rabbit).